The primary structure comprises 184 residues: Elongation factor P (184 aa).

It belongs to the elongation factor P family.

Its subcellular location is the cytoplasm. It participates in protein biosynthesis; polypeptide chain elongation. Involved in peptide bond synthesis. Stimulates efficient translation and peptide-bond synthesis on native or reconstituted 70S ribosomes in vitro. Probably functions indirectly by altering the affinity of the ribosome for aminoacyl-tRNA, thus increasing their reactivity as acceptors for peptidyl transferase. In Albidiferax ferrireducens (strain ATCC BAA-621 / DSM 15236 / T118) (Rhodoferax ferrireducens), this protein is Elongation factor P.